We begin with the raw amino-acid sequence, 277 residues long: 2-dehydro-3-deoxyphosphooctonate aldolase (277 aa).

The protein belongs to the KdsA family.

The protein resides in the cytoplasm. The enzyme catalyses D-arabinose 5-phosphate + phosphoenolpyruvate + H2O = 3-deoxy-alpha-D-manno-2-octulosonate-8-phosphate + phosphate. The protein operates within carbohydrate biosynthesis; 3-deoxy-D-manno-octulosonate biosynthesis; 3-deoxy-D-manno-octulosonate from D-ribulose 5-phosphate: step 2/3. It participates in bacterial outer membrane biogenesis; lipopolysaccharide biosynthesis. The chain is 2-dehydro-3-deoxyphosphooctonate aldolase from Hydrogenovibrio crunogenus (strain DSM 25203 / XCL-2) (Thiomicrospira crunogena).